The following is a 421-amino-acid chain: Ig-like V-type domain-containing protein FAM187A (421 aa).

The signal sequence occupies residues M1 to A18. The Extracellular segment spans residues F19 to A377. An Ig-like V-type domain is found at P268–S362. C290 and C346 are disulfide-bonded. N-linked (GlcNAc...) asparagine glycosylation is present at N318. Residues A378–L398 form a helical membrane-spanning segment. Residues C399 to L421 lie on the Cytoplasmic side of the membrane.

Belongs to the FAM187 family.

It localises to the membrane. This is Ig-like V-type domain-containing protein FAM187A (FAM187A) from Bos taurus (Bovine).